Here is a 542-residue protein sequence, read N- to C-terminus: CTP synthase (542 aa).

The interval 1–265 (MARYVFITGG…DSEVLSAFGI (265 aa)) is amidoligase domain. CTP is bound at residue Ser-13. Ser-13 provides a ligand contact to UTP. ATP is bound at residue 14–19 (SLGKGI). Tyr-54 contacts L-glutamine. Asp-71 lines the ATP pocket. Mg(2+) is bound by residues Asp-71 and Glu-139. CTP-binding positions include 146–148 (DIE), 186–191 (KTKPTQ), and Lys-222. UTP is bound by residues 186–191 (KTKPTQ) and Lys-222. One can recognise a Glutamine amidotransferase type-1 domain in the interval 291-541 (TIAVVGKYTG…IEAAIEQSRL (251 aa)). Gly-353 serves as a coordination point for L-glutamine. Cys-380 serves as the catalytic Nucleophile; for glutamine hydrolysis. Residues 381-384 (FGMQ), Glu-404, and Arg-469 contribute to the L-glutamine site. Active-site residues include His-514 and Glu-516.

It belongs to the CTP synthase family. As to quaternary structure, homotetramer.

The enzyme catalyses UTP + L-glutamine + ATP + H2O = CTP + L-glutamate + ADP + phosphate + 2 H(+). It catalyses the reaction L-glutamine + H2O = L-glutamate + NH4(+). The catalysed reaction is UTP + NH4(+) + ATP = CTP + ADP + phosphate + 2 H(+). The protein operates within pyrimidine metabolism; CTP biosynthesis via de novo pathway; CTP from UDP: step 2/2. With respect to regulation, allosterically activated by GTP, when glutamine is the substrate; GTP has no effect on the reaction when ammonia is the substrate. The allosteric effector GTP functions by stabilizing the protein conformation that binds the tetrahedral intermediate(s) formed during glutamine hydrolysis. Inhibited by the product CTP, via allosteric rather than competitive inhibition. Catalyzes the ATP-dependent amination of UTP to CTP with either L-glutamine or ammonia as the source of nitrogen. Regulates intracellular CTP levels through interactions with the four ribonucleotide triphosphates. This chain is CTP synthase, found in Brucella canis (strain ATCC 23365 / NCTC 10854 / RM-666).